An 853-amino-acid chain; its full sequence is DNA mismatch repair protein MutS (853 aa).

614–621 (GPNMGGKS) contacts ATP.

Belongs to the DNA mismatch repair MutS family.

Its function is as follows. This protein is involved in the repair of mismatches in DNA. It is possible that it carries out the mismatch recognition step. This protein has a weak ATPase activity. The chain is DNA mismatch repair protein MutS from Escherichia coli O6:H1 (strain CFT073 / ATCC 700928 / UPEC).